Reading from the N-terminus, the 295-residue chain is Ventral anterior homeobox 1a (295 aa).

Residues 20–33 are compositionally biased toward basic and acidic residues; sequence ISKPKDNKEIRETQ. A disordered region spans residues 20–63; it reads ISKPKDNKEIRETQAKMPSTYLKEQPGTYPAPGSSELCAKNKSS. The segment at residues 97–156 is a DNA-binding region (homeobox); the sequence is PKRSRTSFTAEQLYRLEMEFQRCQYVVGRERTDLSRQLNLSETQVKVWFQNRRTKQKKDQ. Positions 203–226 are disordered; sequence RAPNSSGPGTRSLATVTSTPPHQP. Over residues 204–222 the composition is skewed to polar residues; sequence APNSSGPGTRSLATVTSTP.

It belongs to the EMX homeobox family.

Its subcellular location is the nucleus. Functionally, may play a role in the specification and maintenance of basal forebrain identity. This chain is Ventral anterior homeobox 1a (vax1-a), found in Xenopus laevis (African clawed frog).